Reading from the N-terminus, the 792-residue chain is Phenylalanine--tRNA ligase beta subunit (792 aa).

A tRNA-binding domain is found at 39-147 (GEALDLIVVA…DDAPIGTPLA (109 aa)). Positions 400–475 (PAPASILLRR…RIRGYEHLPT (76 aa)) constitute a B5 domain. The Mg(2+) site is built by D453, D459, E462, and E463. Residues 698-791 (SRFPFVRRDL…IQQRHDVRIR (94 aa)) form the FDX-ACB domain.

It belongs to the phenylalanyl-tRNA synthetase beta subunit family. Type 1 subfamily. In terms of assembly, tetramer of two alpha and two beta subunits. The cofactor is Mg(2+).

Its subcellular location is the cytoplasm. The catalysed reaction is tRNA(Phe) + L-phenylalanine + ATP = L-phenylalanyl-tRNA(Phe) + AMP + diphosphate + H(+). The chain is Phenylalanine--tRNA ligase beta subunit (pheT) from Xylella fastidiosa (strain 9a5c).